A 271-amino-acid polypeptide reads, in one-letter code: MASENMTPQDYIGHHLNNLQLDLRTFSLVDPQNPPATFWTINIDSMFFSVVLGLLFLVLFRSVAKKATSGVPGKFQTAIELVIGFVNGSVKDMYHGKSKLIAPLALTIFVWVFLMNLMDLLPIDLLPYIAEHVLGLPALRVVPSADVNVTLSMALGVFILILFYSIKMKGIGGFTKELTLQPFNHWAFIPVNLILEGVSLLSKPVSLGLRLFGNMYAGELIFILIAGLLPWWSQWILNVPWAIFHILIITLQAFIFMVLTIVYLSMASEEH.

A run of 5 helical transmembrane segments spans residues 40–60 (TINI…LVLF), 100–120 (LIAP…LMDL), 146–166 (DVNV…FYSI), 220–240 (LIFI…LNVP), and 242–262 (AIFH…LTIV).

The protein belongs to the ATPase A chain family. F-type ATPases have 2 components, CF(1) - the catalytic core - and CF(0) - the membrane proton channel. CF(1) has five subunits: alpha(3), beta(3), gamma(1), delta(1), epsilon(1). CF(0) has three main subunits: a(1), b(2) and c(9-12). The alpha and beta chains form an alternating ring which encloses part of the gamma chain. CF(1) is attached to CF(0) by a central stalk formed by the gamma and epsilon chains, while a peripheral stalk is formed by the delta and b chains.

It localises to the cell inner membrane. Its function is as follows. Key component of the proton channel; it plays a direct role in the translocation of protons across the membrane. The sequence is that of ATP synthase subunit a from Escherichia coli O8 (strain IAI1).